A 309-amino-acid chain; its full sequence is Porphobilinogen deaminase (309 aa).

Cysteine 242 is modified (S-(dipyrrolylmethanemethyl)cysteine).

The protein belongs to the HMBS family. Monomer. Dipyrromethane is required as a cofactor.

The catalysed reaction is 4 porphobilinogen + H2O = hydroxymethylbilane + 4 NH4(+). It participates in porphyrin-containing compound metabolism; protoporphyrin-IX biosynthesis; coproporphyrinogen-III from 5-aminolevulinate: step 2/4. In terms of biological role, tetrapolymerization of the monopyrrole PBG into the hydroxymethylbilane pre-uroporphyrinogen in several discrete steps. The sequence is that of Porphobilinogen deaminase from Syntrophobacter fumaroxidans (strain DSM 10017 / MPOB).